The chain runs to 131 residues: Ribosome-binding factor A (131 aa).

This sequence belongs to the RbfA family. Monomer. Binds 30S ribosomal subunits, but not 50S ribosomal subunits or 70S ribosomes.

Its subcellular location is the cytoplasm. In terms of biological role, one of several proteins that assist in the late maturation steps of the functional core of the 30S ribosomal subunit. Associates with free 30S ribosomal subunits (but not with 30S subunits that are part of 70S ribosomes or polysomes). Required for efficient processing of 16S rRNA. May interact with the 5'-terminal helix region of 16S rRNA. The protein is Ribosome-binding factor A of Gloeothece citriformis (strain PCC 7424) (Cyanothece sp. (strain PCC 7424)).